The following is a 175-amino-acid chain: Ribosome maturation factor RimM (175 aa).

The 80-residue stretch at 96 to 175 (DGDYYWKDLI…IIKVDWDPEF (80 aa)) folds into the PRC barrel domain.

Belongs to the RimM family. Binds ribosomal protein uS19.

Its subcellular location is the cytoplasm. In terms of biological role, an accessory protein needed during the final step in the assembly of 30S ribosomal subunit, possibly for assembly of the head region. Essential for efficient processing of 16S rRNA. May be needed both before and after RbfA during the maturation of 16S rRNA. It has affinity for free ribosomal 30S subunits but not for 70S ribosomes. In Baumannia cicadellinicola subsp. Homalodisca coagulata, this protein is Ribosome maturation factor RimM.